The following is a 226-amino-acid chain: UPF0758 protein Sca_1264 (226 aa).

An MPN domain is found at 102 to 224 (KITSPQDAAD…YLSMVEGGYF (123 aa)). Zn(2+)-binding residues include H173, H175, and D186. The JAMM motif signature appears at 173–186 (HNHPSGDVTPSKED).

This sequence belongs to the UPF0758 family.

The chain is UPF0758 protein Sca_1264 from Staphylococcus carnosus (strain TM300).